Reading from the N-terminus, the 162-residue chain is Photosystem II extrinsic protein V (162 aa).

An N-terminal signal peptide occupies residues 1–26 (MFNKNFWTSIIIGCLFCTITYSGVNA). 4 residues coordinate heme c: Cys62, Cys65, His66, and His117.

Belongs to the cytochrome c family. PsbV subfamily. PSII is composed of 1 copy each of membrane proteins PsbA, PsbB, PsbC, PsbD, PsbE, PsbF, PsbH, PsbI, PsbJ, PsbK, PsbL, PsbM, PsbT, PsbX, PsbY, PsbZ, Psb30/Ycf12, at least 3 peripheral proteins of the oxygen-evolving complex and a large number of cofactors. It forms dimeric complexes. Heme c serves as cofactor.

Its subcellular location is the plastid. It is found in the cyanelle thylakoid membrane. In terms of biological role, one of the extrinsic, lumenal subunits of photosystem II (PSII). PSII is a light-driven water plastoquinone oxidoreductase, using light energy to abstract electrons from H(2)O, generating a proton gradient subsequently used for ATP formation. The extrinsic proteins stabilize the structure of photosystem II oxygen-evolving complex (OEC), the ion environment of oxygen evolution and protect the OEC against heat-induced inactivation. This is Photosystem II extrinsic protein V from Cyanophora paradoxa.